A 351-amino-acid chain; its full sequence is Porphobilinogen deaminase (351 aa).

C242 bears the S-(dipyrrolylmethanemethyl)cysteine mark.

The protein belongs to the HMBS family. As to quaternary structure, monomer. The cofactor is dipyrromethane.

The catalysed reaction is 4 porphobilinogen + H2O = hydroxymethylbilane + 4 NH4(+). The protein operates within porphyrin-containing compound metabolism; protoporphyrin-IX biosynthesis; coproporphyrinogen-III from 5-aminolevulinate: step 2/4. Tetrapolymerization of the monopyrrole PBG into the hydroxymethylbilane pre-uroporphyrinogen in several discrete steps. This chain is Porphobilinogen deaminase, found in Rickettsia africae (strain ESF-5).